The primary structure comprises 417 residues: Phosphoglycerate kinase 1 (417 aa).

Serine 2 bears the N-acetylserine mark. A phosphoserine mark is found at serine 2 and serine 4. Lysine 6 is modified (N6-succinyllysine). The residue at position 11 (lysine 11) is an N6-acetyllysine. (2R)-3-phosphoglycerate is bound by residues valine 23, aspartate 24, phenylalanine 25, asparagine 26, glutamine 38, and arginine 39. Residues 38–43 (QRIKAA) are mitochondrial targeting region exposed following cis-trans isomerization by PIN1 and recognized by the TOM complex for mitochondrial translocation of the protein. Residue lysine 48 is modified to N6-acetyllysine; alternate. N6-succinyllysine; alternate is present on lysine 48. Residues serine 62, histidine 63, glycine 65, and arginine 66 each coordinate (2R)-3-phosphoglycerate. Lysine 75 bears the N6-acetyllysine mark. Tyrosine 76 carries the post-translational modification Phosphotyrosine. 2 positions are modified to N6-acetyllysine: lysine 86 and lysine 91. At lysine 97 the chain carries N6-acetyllysine; alternate. N6-(2-hydroxyisobutyryl)lysine; alternate is present on lysine 97. The (2R)-3-phosphoglycerate site is built by leucine 122 and arginine 123. Position 131 is an N6-acetyllysine; alternate (lysine 131). Lysine 131 carries the post-translational modification N6-malonyllysine; alternate. Lysine 146 is subject to N6-acetyllysine. 2 residues coordinate (2R)-3-phosphoglycerate: histidine 170 and arginine 171. Lysine 191 is modified (N6-succinyllysine). The residue at position 196 (tyrosine 196) is a Phosphotyrosine. Residue lysine 199 is modified to N6-acetyllysine. Position 203 is a phosphoserine; by MAPK1 (serine 203). Residue glycine 214 participates in ADP binding. Glycine 214 contributes to the CDP binding site. Residues alanine 215 and lysine 216 each coordinate AMP. Alanine 215 contacts ATP. Residue alanine 215 participates in Mg(2+) binding. An N6-(2-hydroxyisobutyryl)lysine modification is found at lysine 216. The Mg(2+) site is built by alanine 218 and aspartate 219. Aspartate 219 lines the CDP pocket. Lysine 220 is a binding site for AMP. Residue lysine 220 participates in ATP binding. The residue at position 220 (lysine 220) is an N6-(2-hydroxyisobutyryl)lysine. Glycine 238 lines the ADP pocket. Glycine 238 serves as a coordination point for CDP. AMP is bound at residue glycine 239. Position 239 (glycine 239) interacts with ATP. N6-acetyllysine is present on residues lysine 267 and lysine 291. AMP is bound at residue glycine 313. Residue glycine 313 participates in ATP binding. At lysine 323 the chain carries N6-(2-hydroxyisobutyryl)lysine. Residues glycine 338, valine 340, and phenylalanine 343 each contribute to the CDP site. Phenylalanine 343 contacts ADP. AMP is bound at residue glutamate 344. Glutamate 344 serves as a coordination point for ATP. The residue at position 361 (lysine 361) is an N6-acetyllysine. Aspartate 375 and threonine 376 together coordinate ATP. Position 375 (aspartate 375) interacts with Mg(2+).

The protein belongs to the phosphoglycerate kinase family. In terms of assembly, monomer. Interacts with kinase MAPK1/ERK2; the interaction is direct, occurs under hypoxic conditions, and promotes its interaction with PIN1. Interacts with peptidyl-prolyl cis-trans isomerase PIN1; the interaction is direct, occurs under hypoxic conditions, and targets the protein to the mitochondrion by promoting interactions with the TOM complex. Interacts with mitochondrial circRNA mcPGK1 (via its 2nd stem-loop); the interaction is direct and targets the protein to the mitochondrion by promoting interactions with the TOM complex. Interacts with pyruvate dehydrogenase kinase PDK1; the interaction is direct, occurs under hypoxic conditions and leads to PDK1-mediated inhibition of pyruvate dehydrogenase complex activity. It depends on Mg(2+) as a cofactor. In terms of processing, phosphorylated at Ser-203 by MAPK1/ERK2 under hypoxic conditions, which promotes its mitochondrial targeting. As to expression, mainly expressed in spermatogonia. Localized on the principle piece in the sperm (at protein level). Expression significantly decreased in the testis of elderly men.

It is found in the cytoplasm. The protein localises to the cytosol. Its subcellular location is the mitochondrion matrix. The enzyme catalyses (2R)-3-phosphoglycerate + ATP = (2R)-3-phospho-glyceroyl phosphate + ADP. It catalyses the reaction L-seryl-[protein] + ATP = O-phospho-L-seryl-[protein] + ADP + H(+). Its pathway is carbohydrate degradation; glycolysis; pyruvate from D-glyceraldehyde 3-phosphate: step 2/5. Specifically inhibited by heterocyclic compound CBR-470-0. Its function is as follows. Catalyzes one of the two ATP producing reactions in the glycolytic pathway via the reversible conversion of 1,3-diphosphoglycerate to 3-phosphoglycerate. Both L- and D- forms of purine and pyrimidine nucleotides can be used as substrates, but the activity is much lower on pyrimidines. In addition to its role as a glycolytic enzyme, it seems that PGK1 acts as a polymerase alpha cofactor protein (primer recognition protein). Acts as a protein kinase when localized to the mitochondrion where it phosphorylates pyruvate dehydrogenase kinase PDK1 to inhibit pyruvate dehydrogenase complex activity and suppress the formation of acetyl-coenzyme A from pyruvate, and consequently inhibit oxidative phosphorylation and promote glycolysis. May play a role in sperm motility. The protein is Phosphoglycerate kinase 1 (PGK1) of Homo sapiens (Human).